Reading from the N-terminus, the 108-residue chain is Nucleoid-associated protein CPS_3743 (108 aa).

The interval 87–108 (NKDKMGALTGGMQLPPGMKMPF) is disordered.

This sequence belongs to the YbaB/EbfC family. In terms of assembly, homodimer.

The protein resides in the cytoplasm. The protein localises to the nucleoid. In terms of biological role, binds to DNA and alters its conformation. May be involved in regulation of gene expression, nucleoid organization and DNA protection. The chain is Nucleoid-associated protein CPS_3743 from Colwellia psychrerythraea (strain 34H / ATCC BAA-681) (Vibrio psychroerythus).